We begin with the raw amino-acid sequence, 287 residues long: ATP synthase subunit a (287 aa).

6 helical membrane-spanning segments follow: residues 38–58, 96–116, 139–161, 187–207, 225–245, and 259–279; these read DSMV…WTAA, FIAP…AMDM, VVPT…LRFW, PLFA…EYVA, LVFM…SGVL, and LFHI…ALIY.

Belongs to the ATPase A chain family. F-type ATPases have 2 components, CF(1) - the catalytic core - and CF(0) - the membrane proton channel. CF(1) has five subunits: alpha(3), beta(3), gamma(1), delta(1), epsilon(1). CF(0) has three main subunits: a(1), b(2) and c(9-12). The alpha and beta chains form an alternating ring which encloses part of the gamma chain. CF(1) is attached to CF(0) by a central stalk formed by the gamma and epsilon chains, while a peripheral stalk is formed by the delta and b chains.

The protein resides in the cell inner membrane. Key component of the proton channel; it plays a direct role in the translocation of protons across the membrane. The polypeptide is ATP synthase subunit a (Verminephrobacter eiseniae (strain EF01-2)).